The following is a 229-amino-acid chain: Enolase-phosphatase E1 (229 aa).

The Mg(2+) site is built by aspartate 7 and glutamate 9. Substrate-binding positions include 122 to 123 (SS) and lysine 161. Residue aspartate 186 coordinates Mg(2+).

Belongs to the HAD-like hydrolase superfamily. MasA/MtnC family. In terms of assembly, monomer. It depends on Mg(2+) as a cofactor.

The protein resides in the cytoplasm. It is found in the nucleus. It carries out the reaction 5-methylsulfanyl-2,3-dioxopentyl phosphate + H2O = 1,2-dihydroxy-5-(methylsulfanyl)pent-1-en-3-one + phosphate. The protein operates within amino-acid biosynthesis; L-methionine biosynthesis via salvage pathway; L-methionine from S-methyl-5-thio-alpha-D-ribose 1-phosphate: step 3/6. It participates in amino-acid biosynthesis; L-methionine biosynthesis via salvage pathway; L-methionine from S-methyl-5-thio-alpha-D-ribose 1-phosphate: step 4/6. Bifunctional enzyme that catalyzes the enolization of 2,3-diketo-5-methylthiopentyl-1-phosphate (DK-MTP-1-P) into the intermediate 2-hydroxy-3-keto-5-methylthiopentenyl-1-phosphate (HK-MTPenyl-1-P), which is then dephosphorylated to form the acireductone 1,2-dihydroxy-3-keto-5-methylthiopentene (DHK-MTPene). This Clavispora lusitaniae (strain ATCC 42720) (Yeast) protein is Enolase-phosphatase E1.